We begin with the raw amino-acid sequence, 231 residues long: NADH-ubiquinone oxidoreductase chain 4 (231 aa).

A run of 7 helical transmembrane segments spans residues 1–21, 34–54, 63–85, 89–111, 128–148, 169–189, and 211–231; these read PIAGSMILAAILLKLGGYGII, VFLPFIVLALWGAILANLTCL, IAYSSISHMGLVVAAIIIQTPWG, AMALMIAHGFTSSALFCLANTTY, MMPMATTWWLMANLMNIAIPP, TIIMLGLSMLITASYSLHMFL, and LLMTLHLIPLLMISFKPELVT.

Belongs to the complex I subunit 4 family.

Its subcellular location is the mitochondrion membrane. The enzyme catalyses a ubiquinone + NADH + 5 H(+)(in) = a ubiquinol + NAD(+) + 4 H(+)(out). In terms of biological role, core subunit of the mitochondrial membrane respiratory chain NADH dehydrogenase (Complex I) that is believed to belong to the minimal assembly required for catalysis. Complex I functions in the transfer of electrons from NADH to the respiratory chain. The immediate electron acceptor for the enzyme is believed to be ubiquinone. The protein is NADH-ubiquinone oxidoreductase chain 4 (MT-ND4) of Sistrurus miliarius (Pigmy rattlesnake).